Consider the following 343-residue polypeptide: MRRFFYRHTRGVTEVVVGRGLPYGEYIERPVVLAEEGLRPPIPGAPTLVLRGGEEVKSLEVLTKVYSFLKEVGADRSTTLVAVGGGALLDLATFAAGTYMRGIRLVHIPTTLLAMVDAALGGKGAVDWGPVKNLVGVFYQPAAILCDLSWLETLPERVYRSAFAEVVKYGLALDGDFYSWVRENAKALLARDWGALEYAVYRSLQLKAGVVEVDEFEERGIRQVLNVGHTVGHAVERVLGLLHGEAVAVGIVAELRLSSELGYLRESHVAEAAEVLSSLGLPTSVKATEQQLAEAAALVKFDKKRRGGHIYIPLVVRPGRWILEKIAVEEVEKAVRYVLHQGG.

NAD(+) contacts are provided by residues 86–90 (GALLD), 110–111 (TT), Lys-123, and Lys-132. Residues Glu-165, His-229, and His-243 each contribute to the Zn(2+) site.

Belongs to the sugar phosphate cyclases superfamily. Dehydroquinate synthase family. Co(2+) is required as a cofactor. It depends on Zn(2+) as a cofactor. The cofactor is NAD(+).

The protein resides in the cytoplasm. It carries out the reaction 7-phospho-2-dehydro-3-deoxy-D-arabino-heptonate = 3-dehydroquinate + phosphate. The protein operates within metabolic intermediate biosynthesis; chorismate biosynthesis; chorismate from D-erythrose 4-phosphate and phosphoenolpyruvate: step 2/7. Catalyzes the conversion of 3-deoxy-D-arabino-heptulosonate 7-phosphate (DAHP) to dehydroquinate (DHQ). The protein is 3-dehydroquinate synthase of Pyrobaculum islandicum (strain DSM 4184 / JCM 9189 / GEO3).